Reading from the N-terminus, the 627-residue chain is Capsid vertex component 2 (627 aa).

The segment at 1–56 (MFGRGLPPLKFGQIGGDGWSTVLADPGNRLIVANAHRSEPRLRVETLIREELLTSR) is interaction with major capsid protein/MCP. Residues 458–480 (LSGDGDPIRAPGSRPPAAAEATL) are disordered.

Belongs to the herpesviridae CVC2 protein family. As to quaternary structure, heterodimerizes with CVC1. Interacts with major capsid protein/MCP and triplex capsid protein 1/TRX1 at the pentamer vertices. Interacts with the large tegument protein/LTP.

The protein resides in the virion. It is found in the host nucleus. Its function is as follows. Capsid vertex-specific component that plays a role during viral DNA encapsidation, assuring correct genome cleavage and presumably stabilizing capsids that contain full-length viral genomes. Participates in the interaction between the capsid and the tegument through interaction with the large tegument protein/LTP. This chain is Capsid vertex component 2, found in Psittacid herpesvirus 1 (isolate Amazon parrot/-/97-0001/1997) (PsHV-1).